Here is a 128-residue protein sequence, read N- to C-terminus: Ribonuclease P protein component (128 aa).

It belongs to the RnpA family. Consists of a catalytic RNA component (M1 or rnpB) and a protein subunit.

The enzyme catalyses Endonucleolytic cleavage of RNA, removing 5'-extranucleotides from tRNA precursor.. Functionally, RNaseP catalyzes the removal of the 5'-leader sequence from pre-tRNA to produce the mature 5'-terminus. It can also cleave other RNA substrates such as 4.5S RNA. The protein component plays an auxiliary but essential role in vivo by binding to the 5'-leader sequence and broadening the substrate specificity of the ribozyme. The polypeptide is Ribonuclease P protein component (Methylococcus capsulatus (strain ATCC 33009 / NCIMB 11132 / Bath)).